The following is a 354-amino-acid chain: 3-dehydroquinate synthase (354 aa).

NAD(+) contacts are provided by residues 100 to 104 (GATGD), 124 to 125 (TT), K136, K145, and 163 to 166 (FLAT). Zn(2+) contacts are provided by E178, H242, and H256.

Belongs to the sugar phosphate cyclases superfamily. Dehydroquinate synthase family. The cofactor is Co(2+). It depends on Zn(2+) as a cofactor. Requires NAD(+) as cofactor.

It is found in the cytoplasm. It catalyses the reaction 7-phospho-2-dehydro-3-deoxy-D-arabino-heptonate = 3-dehydroquinate + phosphate. It functions in the pathway metabolic intermediate biosynthesis; chorismate biosynthesis; chorismate from D-erythrose 4-phosphate and phosphoenolpyruvate: step 2/7. Functionally, catalyzes the conversion of 3-deoxy-D-arabino-heptulosonate 7-phosphate (DAHP) to dehydroquinate (DHQ). In Staphylococcus haemolyticus (strain JCSC1435), this protein is 3-dehydroquinate synthase.